The primary structure comprises 233 residues: Ribonuclease 3 (233 aa).

Positions 5-127 (LERLCRKLGY…VIGAVYLDGG (123 aa)) constitute an RNase III domain. E40 contributes to the Mg(2+) binding site. Residue D44 is part of the active site. The Mg(2+) site is built by D113 and E116. The active site involves E116. The DRBM domain maps to 156–226 (DPKTRLQEYL…ATRALALLLA (71 aa)).

The protein belongs to the ribonuclease III family. Homodimer. Mg(2+) is required as a cofactor.

It localises to the cytoplasm. It carries out the reaction Endonucleolytic cleavage to 5'-phosphomonoester.. Functionally, digests double-stranded RNA. Involved in the processing of primary rRNA transcript to yield the immediate precursors to the large and small rRNAs (23S and 16S). Processes some mRNAs, and tRNAs when they are encoded in the rRNA operon. Processes pre-crRNA and tracrRNA of type II CRISPR loci if present in the organism. This Nitrosococcus oceani (strain ATCC 19707 / BCRC 17464 / JCM 30415 / NCIMB 11848 / C-107) protein is Ribonuclease 3.